The primary structure comprises 151 residues: Deoxyuridine 5'-triphosphate nucleotidohydrolase (151 aa).

Substrate is bound by residues 70–72 (RSG), asparagine 83, 87–89 (LID), and methionine 97.

The protein belongs to the dUTPase family. Homotrimer. Requires Mg(2+) as cofactor.

It carries out the reaction dUTP + H2O = dUMP + diphosphate + H(+). Its pathway is pyrimidine metabolism; dUMP biosynthesis; dUMP from dCTP (dUTP route): step 2/2. Functionally, this enzyme is involved in nucleotide metabolism: it produces dUMP, the immediate precursor of thymidine nucleotides and it decreases the intracellular concentration of dUTP so that uracil cannot be incorporated into DNA. The polypeptide is Deoxyuridine 5'-triphosphate nucleotidohydrolase (Escherichia coli O45:K1 (strain S88 / ExPEC)).